A 1055-amino-acid chain; its full sequence is Protein SUPPRESSOR OF QUENCHING 1, chloroplastic (1055 aa).

Residues Met1–Ser56 constitute a chloroplast transit peptide. N-acetylvaline is present on Val57. Over Ala59–Arg327 the chain is Stromal. Asp80 serves as the catalytic Nucleophile. Mg(2+)-binding residues include Asp80 and Asp82. Asp80 provides a ligand contact to substrate. Asp82 acts as the Proton donor in catalysis. Residues Glu89, Thr118–Lys122, Ala141–Arg144, and Ser183–Lys189 contribute to the substrate site. Asp242 is a binding site for Mg(2+). A helical membrane pass occupies residues Tyr328 to Trp345. Residues Lys346–Arg1055 are Lumenal-facing. The Thioredoxin domain maps to Ala359–Thr536. Cys431 and Cys434 are disulfide-bonded. NHL repeat units follow at residues Pro565–Glu597, Gly611–Leu647, Gly673–Leu712, Leu802–Val832, and Gly854–Asn887.

It in the N-terminal section; belongs to the HAD-like hydrolase superfamily. The protein in the C-terminal section; belongs to the thioredoxin family. Mg(2+) is required as a cofactor.

It is found in the plastid. The protein resides in the chloroplast thylakoid membrane. Functionally, required to maintain light harvesting efficiency, especially during nonphotochemical quenching (NPQ) recovery, via the regulation of chlorophyll excited-state lifetime probably by preventing the formation of a slowly reversible form of antenna quenching. This chain is Protein SUPPRESSOR OF QUENCHING 1, chloroplastic, found in Arabidopsis thaliana (Mouse-ear cress).